A 1325-amino-acid chain; its full sequence is Nephrocystin-3 (1325 aa).

The disordered stretch occupies residues 1-20; that stretch reads MGTASSLVSPTGGEVIEDTY. Gly2 carries N-myristoyl glycine lipidation. Positions 107–203 form a coiled coil; that stretch reads SMGRREAKLD…QRLQAQGIQV (97 aa). 11 TPR repeats span residues 467 to 500, 881 to 914, 916 to 937, 938 to 971, 980 to 1013, 1022 to 1055, 1088 to 1121, 1130 to 1163, 1172 to 1205, 1214 to 1247, and 1256 to 1289; these read TPEEDDFGDVLWDIHDEQEQMEAFQQTSSSAHEL, CLLNLLVAQNLYKRGHFAELLSYWQFVGKDKGAM, TEYFESLKQYENSEGEENMLCL, ADLYETLGRFLKDLGLLSQAVVPLQRSLEIRETA, AQSLHQLAGVYVQWKKFGDAEQLYKQALEISENA, ARELEALATLYHKQNKYEQAEHFRKKSVIIRQQA, ARTLNELGVLYFLQNNLETAEQFLKRSLEMRERV, AQSLNNLAALCNEKKQYEKAEELYERALDIRRRA, AYTVKHLAILYKKTGKVDKAVPLYELAVEIRQKS, ATALVNLAVLHSQMKKHSEALPLYERALKIYEDS, and GETLKNLAVLSYEEGNFEKAAELYKRAMEIKEAE. The tract at residues 1293-1325 is disordered; it reads LGGKAPSRQSSSGDTFLFKTTHSPNVFLPQGQS. Over residues 1299–1325 the composition is skewed to polar residues; it reads SRQSSSGDTFLFKTTHSPNVFLPQGQS.

As to quaternary structure, interacts with NPHP1 and INVS/NPHP2. Interacts (when myristoylated) with UNC119 and UNC119B; interaction is required for localization to cilium. Interacts with CEP164. Component of a complex containing at least ANKS6, INVS, NEK8 and NPHP3. ANKS6 may organize complex assembly by linking INVS and NPHP3 to NEK8 and INVS may target the complex to the proximal ciliary axoneme.

Its subcellular location is the cell projection. The protein localises to the cilium. Required for normal ciliary development and function. Inhibits disheveled-1-induced canonical Wnt-signaling activity and may also play a role in the control of non-canonical Wnt signaling that regulates planar cell polarity. Probably acts as a molecular switch between different Wnt signaling pathways. Required for proper convergent extension cell movements. This Mus musculus (Mouse) protein is Nephrocystin-3 (Nphp3).